The primary structure comprises 243 residues: Probable transcriptional regulatory protein BDU_30 (243 aa).

This sequence belongs to the TACO1 family.

It localises to the cytoplasm. This is Probable transcriptional regulatory protein BDU_30 from Borrelia duttonii (strain Ly).